A 143-amino-acid chain; its full sequence is Zinc-containing ferredoxin (143 aa).

The N-terminal extension stretch occupies residues 13–60 (PIDEHFLENDKDYPVTGQHNGHDVRAEGMQRLDADGKPYPTKLGIHGT). His-31, His-34, and His-58 together coordinate Zn(2+). 2 consecutive 4Fe-4S ferredoxin-type domains span residues 60-89 (THVA…WNLN) and 115-143 (KCDP…KITP). Cys-69 and Cys-75 together coordinate [3Fe-4S] cluster. Cys-79 contributes to the [4Fe-4S] cluster binding site. Asp-117 serves as a coordination point for Zn(2+). Residues Cys-124, Cys-127, and Cys-130 each coordinate [4Fe-4S] cluster. Cys-134 lines the [3Fe-4S] cluster pocket.

[3Fe-4S] cluster serves as cofactor. [4Fe-4S] cluster is required as a cofactor. Requires Zn(2+) as cofactor.

Its function is as follows. Ferredoxins are iron-sulfur proteins that transfer electrons in a wide variety of metabolic reactions. The sequence is that of Zinc-containing ferredoxin (zfx) from Thermoplasma acidophilum (strain ATCC 25905 / DSM 1728 / JCM 9062 / NBRC 15155 / AMRC-C165).